Consider the following 342-residue polypeptide: Glycerol-1-phosphate dehydrogenase [NAD(P)+] (342 aa).

NAD(+) is bound by residues 84–88 (GRPID) and 106–109 (TSAS). Position 111 (aspartate 111) interacts with substrate. Serine 115 provides a ligand contact to NAD(+). Aspartate 160 provides a ligand contact to substrate. Residues aspartate 160 and histidine 241 each contribute to the Zn(2+) site. Histidine 245 provides a ligand contact to substrate. Histidine 260 is a Zn(2+) binding site.

It belongs to the glycerol-1-phosphate dehydrogenase family. Homodimer. The cofactor is Zn(2+).

It is found in the cytoplasm. The enzyme catalyses sn-glycerol 1-phosphate + NAD(+) = dihydroxyacetone phosphate + NADH + H(+). It carries out the reaction sn-glycerol 1-phosphate + NADP(+) = dihydroxyacetone phosphate + NADPH + H(+). The protein operates within membrane lipid metabolism; glycerophospholipid metabolism. Its function is as follows. Catalyzes the NAD(P)H-dependent reduction of dihydroxyacetonephosphate (DHAP or glycerone phosphate) to glycerol 1-phosphate (G1P). The G1P thus generated is used as the glycerophosphate backbone of phospholipids in the cellular membranes of Archaea. The sequence is that of Glycerol-1-phosphate dehydrogenase [NAD(P)+] from Pyrobaculum islandicum (strain DSM 4184 / JCM 9189 / GEO3).